The sequence spans 493 residues: Alpha-amylase-related protein (493 aa).

The first 19 residues, 1–19, serve as a signal peptide directing secretion; sequence MFKFALTQTLCLAGSLSLA. The residue at position 20 (Gln-20) is a Pyrrolidone carboxylic acid. Cys-47 and Cys-103 are joined by a disulfide. Ca(2+)-binding residues include Asn-117, Gln-168, and Asp-177. An intrachain disulfide couples Cys-156 to Cys-170. Arg-205 is a binding site for chloride. The active-site Nucleophile is Asp-207. His-211 provides a ligand contact to Ca(2+). Glu-244 functions as the Proton donor in the catalytic mechanism. Asn-307 and Arg-342 together coordinate chloride. 3 disulfides stabilise this stretch: Cys-375–Cys-381, Cys-417–Cys-440, and Cys-447–Cys-459.

Belongs to the glycosyl hydrolase 13 family. Monomer. Ca(2+) serves as cofactor. The cofactor is chloride.

The protein localises to the secreted. The enzyme catalyses Endohydrolysis of (1-&gt;4)-alpha-D-glucosidic linkages in polysaccharides containing three or more (1-&gt;4)-alpha-linked D-glucose units.. The sequence is that of Alpha-amylase-related protein (Amyrel) from Drosophila mauritiana (Fruit fly).